We begin with the raw amino-acid sequence, 264 residues long: MRHSRILADVGAALRFYSRIPVPAGAAEDAFAPPDLKRIAYAVPLAGAAIGLAGAAILIGAHALGLPNLVAAILAVLTCVLLTGALHEDGLADTADGFGGGASRLRRLEIMRDSRIGSYGACALVFSLLLRVALLDGLLALSPTRAALALIAAASLSRAAGMLLLEFLPPARADGASAAAGQPGADAAVRSALVGALLATLLIVPSTGVGATLMAIGLSVLALFAMTRLSNRLIGGQTGDVAGAVQQLCEIAFLMGVLIYARPH.

6 helical membrane-spanning segments follow: residues Ile39–Ile59, Ala63–Thr83, Ala121–Leu141, Leu148–Leu168, Leu201–Leu221, and Val241–Ala261.

Belongs to the CobS family. It depends on Mg(2+) as a cofactor.

The protein resides in the cell inner membrane. It carries out the reaction alpha-ribazole + adenosylcob(III)inamide-GDP = adenosylcob(III)alamin + GMP + H(+). It catalyses the reaction alpha-ribazole 5'-phosphate + adenosylcob(III)inamide-GDP = adenosylcob(III)alamin 5'-phosphate + GMP + H(+). It functions in the pathway cofactor biosynthesis; adenosylcobalamin biosynthesis; adenosylcobalamin from cob(II)yrinate a,c-diamide: step 7/7. Joins adenosylcobinamide-GDP and alpha-ribazole to generate adenosylcobalamin (Ado-cobalamin). Also synthesizes adenosylcobalamin 5'-phosphate from adenosylcobinamide-GDP and alpha-ribazole 5'-phosphate. The chain is Adenosylcobinamide-GDP ribazoletransferase from Azorhizobium caulinodans (strain ATCC 43989 / DSM 5975 / JCM 20966 / LMG 6465 / NBRC 14845 / NCIMB 13405 / ORS 571).